Here is a 398-residue protein sequence, read N- to C-terminus: MSASNGEIVQRIESLLASAKKLQGDDQYGRFGLLKEIDLLYQDVEPPINTFFKQWTSLTFFSCIDIAIKLGLFEHMKGRESITAKELGALVNVDDDVIARVMRVLVASRFVASKGEDAYAHTHKSLVYVKGEHTAVDSFNLISLLAVSYITIPEYLKTRSADELVDIRKTPYACAYGMEGKTFYEVLSTNPDHLDTFNRSMSEPGPEWGMFPFESLRENVLAEPERPFVVDIGGGKGQALLRIQEETGKVFGTSSQLILQERPDVLEQINQDDIAGITKMPYDFHTKQPVKDAHVYFFSQIIHNYPDHVCQDILKQAAGAMGPSSRLLIVEAVLPAQTDVGGDMGAYLIDFVGLAMGGKERTEKEFATLLGTVGLELVKVWHGKARHHAIVEARLKRA.

S-adenosyl-L-methionine-binding positions include 233-234, Glu-261, and 283-284; these read GG and DF. Catalysis depends on His-303, which acts as the Proton acceptor.

This sequence belongs to the class I-like SAM-binding methyltransferase superfamily. Cation-independent O-methyltransferase family.

The protein operates within secondary metabolite biosynthesis. Functionally, O-methyltransferase; part of the gene cluster that mediates the biosynthesis of hypothemycin, a resorcylic acid lactone (RAL) that irreversibly inhibits a subset of protein kinases with a conserved cysteine in the ATP binding site such as human ERK2. The first step is performed by both PKSs hmp3 and hmp8 and leads to the production of 7',8'-dehydrozearalenol (DHZ). The highly reducing PKS hpm8 synthesizes the reduced hexaketide (7S,11S,2E,8E)-7,11-dihydroxy-dodeca-2,8-dienoate, which is transferred downstream to the non-reducing PKS hpm3. Hpm3 then extends the reduced hexaketide to a nonaketide, after which regioselective cyclization and macrolactonization affords DHZ. The next step is the conversion of DHZ into aigialomycin C and is performed by the O-methyltransferase hmp5, the FAD-binding monooxygenase hmp7, and the cytochrome P450 monooxygenase hmp1. The wide substrate tolerance of the hmp5 and hmp7 implies that the reactions from DHZ to aigialomycin C can occur in any order. The steps from aigialomycin C to hypothemycin are less well established. The FAD-linked oxidoreductase hmp9 presumably catalyzes oxidation of the C-6' hydroxyl to a ketone. The timing of this oxidation is important, since the resulting enone functional group is a Michael acceptor that can react spontaneously with glutathione, an abundant metabolite in fungal cells. The glutathione S-transferase hmp2 catalyzes cis-trans isomerization of the 7',8' double bond with equilibrium favoring the trans isomer. The hpm6-encoded transporter might preferentially pump hypothemycin out of the cell relative to the trans isomer aigialomycin A. The cis-to-trans isomerization may be coupled with C-4' hydroxylation, since all known hypothemycin analogs containing the enone functional group also have hydroxyl groups at both C-4' and C-5'. This is O-methyltransferase hmp5 from Hypomyces subiculosus (Nectria subiculosa).